Reading from the N-terminus, the 955-residue chain is Sex determination protein fruitless (955 aa).

Disordered stretches follow at residues 1 to 55 and 70 to 89; these read MMAT…HAHS and IETDVRAPPPPLPPPPLPLP. Over residues 35 to 55 the composition is skewed to basic residues; it reads PHGHGHLHSHAHAHGHGHAHS. Residues 76-89 are compositionally biased toward pro residues; that stretch reads APPPPLPPPPLPLP. The BTB domain occupies 131–196; sequence CDVTLACEGE…MYKGEVNVGQ (66 aa). 3 disordered regions span residues 229-288, 352-526, and 784-814; these read LRDS…SMSE, NRSA…LGGG, and ANHQLHQHPPSATHPSHSQSSPHYPSASGAG. Residues 233 to 246 are compositionally biased toward polar residues; that stretch reads AASSPTGRGPSNYT. Basic and acidic residues-rich tracts occupy residues 258-279 and 360-379; these read AMRESRDSLRSRCERDLRDELT and CSDRGSERGTLERTDSRDDL. Residues 387 to 420 are compositionally biased toward low complexity; that stretch reads KDNNNSNSSSTGGNNNNNNNNNNNSSSNNNNSSS. A compositionally biased stretch (basic and acidic residues) spans 421 to 446; it reads NRERNNSGERERERERERERDRDREL. Composition is skewed to low complexity over residues 464–475 and 790–814; these read SSSNCDNSLSSS and QHPPSATHPSHSQSSPHYPSASGAG. A C2H2-type zinc finger spans residues 918 to 941; the sequence is HECPVCGQKFTRRDNMKAHCKIKH.

As to expression, expressed in parts of the adult male brain associated with the courtship song and steps of the male courtship. Also expressed in the larval and pupal male mushroom body and optic lobe. Expressed in pupal female optic lobe.

It localises to the nucleus. Its function is as follows. Probably acts as a transcriptional regulator. Part of the somatic sex determination hierarchy; sex determination genes transformer (tra) and transformer-2 (tra-2) switch fru splicing from the male-specific pattern to the female-specific pattern through activation of the female-specific fru 5'-splice site. Vital for the development of males and females. Controls the development of the male specific abdominal muscle of Lawrence. Plays a role in male courtship behavior and sexual orientation. Enhances male-specific expression of takeout in brain-associated fat body. The chain is Sex determination protein fruitless (fru) from Drosophila melanogaster (Fruit fly).